We begin with the raw amino-acid sequence, 140 residues long: ATP synthase epsilon chain (140 aa).

It belongs to the ATPase epsilon chain family. In terms of assembly, F-type ATPases have 2 components, CF(1) - the catalytic core - and CF(0) - the membrane proton channel. CF(1) has five subunits: alpha(3), beta(3), gamma(1), delta(1), epsilon(1). CF(0) has three main subunits: a, b and c.

The protein localises to the cell inner membrane. Functionally, produces ATP from ADP in the presence of a proton gradient across the membrane. The polypeptide is ATP synthase epsilon chain (Pseudoalteromonas translucida (strain TAC 125)).